A 224-amino-acid polypeptide reads, in one-letter code: Precorrin-2 dehydrogenase (224 aa).

NAD(+) is bound by residues 26-27 (SV) and 47-50 (EFSQ).

This sequence belongs to the precorrin-2 dehydrogenase / sirohydrochlorin ferrochelatase family. As to quaternary structure, homodimer.

It carries out the reaction precorrin-2 + NAD(+) = sirohydrochlorin + NADH + 2 H(+). It functions in the pathway porphyrin-containing compound metabolism; siroheme biosynthesis; sirohydrochlorin from precorrin-2: step 1/1. Its function is as follows. Involved in the archaeal biosynthesis of heme. Catalyzes the oxiation of precorrin-2 into sirohydroclorin. The polypeptide is Precorrin-2 dehydrogenase (Methanosarcina barkeri (strain Fusaro / DSM 804)).